An 805-amino-acid chain; its full sequence is Leucine--tRNA ligase (805 aa).

The short motif at 40-51 (PYPSGQGLHVGH) is the 'HIGH' region element. A 'KMSKS' region motif is present at residues 576–580 (KMSKS). Lys-579 contacts ATP.

This sequence belongs to the class-I aminoacyl-tRNA synthetase family.

The protein resides in the cytoplasm. It carries out the reaction tRNA(Leu) + L-leucine + ATP = L-leucyl-tRNA(Leu) + AMP + diphosphate. The polypeptide is Leucine--tRNA ligase (Ligilactobacillus salivarius (strain UCC118) (Lactobacillus salivarius)).